A 198-amino-acid chain; its full sequence is Ribonuclease HII (198 aa).

An RNase H type-2 domain is found at 11–198 (ELIAGVDEVG…SPVRKLLENE (188 aa)). D17, E18, and D109 together coordinate a divalent metal cation.

Belongs to the RNase HII family. It depends on Mn(2+) as a cofactor. Mg(2+) is required as a cofactor.

It localises to the cytoplasm. It carries out the reaction Endonucleolytic cleavage to 5'-phosphomonoester.. Functionally, endonuclease that specifically degrades the RNA of RNA-DNA hybrids. This chain is Ribonuclease HII, found in Mannheimia succiniciproducens (strain KCTC 0769BP / MBEL55E).